A 348-amino-acid chain; its full sequence is Alcohol dehydrogenase 2 (348 aa).

Positions 44, 67, 98, 101, 104, 112, and 154 each coordinate Zn(2+). Residues 178–184, D202, K207, 269–271, and R341 contribute to the NAD(+) site; these read GAAGGLG and VGL.

Belongs to the zinc-containing alcohol dehydrogenase family. In terms of assembly, homotetramer. It depends on Zn(2+) as a cofactor.

Its subcellular location is the cytoplasm. The enzyme catalyses a primary alcohol + NAD(+) = an aldehyde + NADH + H(+). It carries out the reaction a secondary alcohol + NAD(+) = a ketone + NADH + H(+). The polypeptide is Alcohol dehydrogenase 2 (ADH2) (Candida albicans (strain SC5314 / ATCC MYA-2876) (Yeast)).